The sequence spans 490 residues: Adenylosuccinate lyase (490 aa).

The residue at position 2 (Ala2) is an N-acetylalanine. Substrate is bound by residues 26 to 27 (RY), 91 to 93 (RHD), and 117 to 118 (TS). The residue at position 153 (Lys153) is an N6-acetyllysine. His165 functions as the Proton donor/acceptor in the catalytic mechanism. Gln247 provides a ligand contact to substrate. Ser295 acts as the Proton donor/acceptor in catalysis. Lys301 bears the N6-acetyllysine mark. Arg309, Arg335, Ser340, and Arg344 together coordinate substrate. Lys421 is covalently cross-linked (Glycyl lysine isopeptide (Lys-Gly) (interchain with G-Cter in SUMO1)).

Belongs to the lyase 1 family. Adenylosuccinate lyase subfamily. Homotetramer. Residues from neighboring subunits contribute catalytic and substrate-binding residues to each active site.

The enzyme catalyses N(6)-(1,2-dicarboxyethyl)-AMP = fumarate + AMP. It carries out the reaction (2S)-2-[5-amino-1-(5-phospho-beta-D-ribosyl)imidazole-4-carboxamido]succinate = 5-amino-1-(5-phospho-beta-D-ribosyl)imidazole-4-carboxamide + fumarate. The protein operates within purine metabolism; AMP biosynthesis via de novo pathway; AMP from IMP: step 2/2. It participates in purine metabolism; IMP biosynthesis via de novo pathway; 5-amino-1-(5-phospho-D-ribosyl)imidazole-4-carboxamide from 5-amino-1-(5-phospho-D-ribosyl)imidazole-4-carboxylate: step 2/2. Its function is as follows. Catalyzes two non-sequential steps in de novo AMP synthesis: converts (S)-2-(5-amino-1-(5-phospho-D-ribosyl)imidazole-4-carboxamido)succinate (SAICAR) to fumarate plus 5-amino-1-(5-phospho-D-ribosyl)imidazole-4-carboxamide, and thereby also contributes to de novo IMP synthesis, and converts succinyladenosine monophosphate (SAMP) to AMP and fumarate. This Bos taurus (Bovine) protein is Adenylosuccinate lyase (ADSL).